The following is an 81-amino-acid chain: MKAGIHPDYKKVVFMDTNTGFKFLSGSTRGSNETVEWEDGNTYPLLKVEISSDSHPFYTGRQKFATADGRVDRFNKKYGLK.

Belongs to the bacterial ribosomal protein bL31 family. Type B subfamily. As to quaternary structure, part of the 50S ribosomal subunit.

The protein is Large ribosomal subunit protein bL31B of Bacillus cereus (strain ATCC 10987 / NRS 248).